The sequence spans 593 residues: uncharacterized protein (593 aa).

Transmembrane regions (helical) follow at residues 21 to 41 (PAVFIPASVVIVAMIVVSVVY), 60 to 80 (VGWWYILVATGFVVFALYCGI), 97 to 117 (FSFWAWLAMLFSAGMGIGLVF), 148 to 168 (MALTVFHWGLHAWAIYVVVGL), 204 to 224 (VDVIAIVGTLFGVATSLGFGI), 243 to 263 (WMVGMIAAITATATASVVSGV), 275 to 295 (MALAAALALFVLLLGPTLFLL), 328 to 348 (WTIFYWGWWISWAPFVGMFIA), 359 to 379 (FIGAVLLVPTVIASLWFTIFG), 410 to 430 (GLPIGAITSVLAVLVIVFFFV), 457 to 477 (VYWAVLEGVAAAVLLLIGGAG), and 485 to 505 (AAIATALPFSIVMVVACYAMT).

The protein belongs to the BCCT transporter (TC 2.A.15) family.

It is found in the cell membrane. This is an uncharacterized protein from Mycobacterium tuberculosis (strain CDC 1551 / Oshkosh).